The primary structure comprises 328 residues: Renalase (328 aa).

FAD-binding positions include alanine 13, 32 to 33, arginine 40, and 56 to 57; these read DK and QY. Substrate contacts are provided by residues 57–61 and 96–98; these read YFTAR and SPD. Isoleucine 128 is an FAD binding site. Threonine 185 lines the substrate pocket. Aspartate 302 provides a ligand contact to FAD. Arginine 308 contributes to the substrate binding site. FAD is bound at residue valine 309.

Belongs to the bacterial renalase family. FAD is required as a cofactor.

The catalysed reaction is 1,2-dihydro-beta-NAD + O2 + H(+) = H2O2 + NAD(+). It catalyses the reaction 1,2-dihydro-beta-NADP + O2 + H(+) = H2O2 + NADP(+). It carries out the reaction 1,6-dihydro-beta-NADP + O2 + H(+) = H2O2 + NADP(+). The enzyme catalyses 1,6-dihydro-beta-NAD + O2 + H(+) = H2O2 + NAD(+). Catalyzes the oxidation of the 1,2-dihydro- and 1,6-dihydro- isomeric forms of beta-NAD(P) back to beta-NAD(P)+. Has a preference for 1,2-dihydro-beta-NAD as substrate. May serve to protect primary metabolism dehydrogenases from inhibition by the 1,2-dihydro- and 1,6-dihydro-beta-NAD(P) isomers. This is Renalase from Pseudomonas savastanoi pv. phaseolicola (strain 1448A / Race 6) (Pseudomonas syringae pv. phaseolicola (strain 1448A / Race 6)).